The sequence spans 447 residues: Na(+)-translocating NADH-quinone reductase subunit A (447 aa).

This sequence belongs to the NqrA family. As to quaternary structure, composed of six subunits; NqrA, NqrB, NqrC, NqrD, NqrE and NqrF.

The enzyme catalyses a ubiquinone + n Na(+)(in) + NADH + H(+) = a ubiquinol + n Na(+)(out) + NAD(+). In terms of biological role, NQR complex catalyzes the reduction of ubiquinone-1 to ubiquinol by two successive reactions, coupled with the transport of Na(+) ions from the cytoplasm to the periplasm. NqrA to NqrE are probably involved in the second step, the conversion of ubisemiquinone to ubiquinol. In Haemophilus influenzae (strain PittEE), this protein is Na(+)-translocating NADH-quinone reductase subunit A.